The following is a 341-amino-acid chain: Chorismate synthase (341 aa).

Disordered regions lie at residues 45-64 (LERR…GRQE) and 109-134 (HADD…GRET). R48 is a binding site for NADP(+). FMN is bound by residues 128-130 (RSS), G280, 295-299 (KPTSS), and R308.

This sequence belongs to the chorismate synthase family. Homotetramer. It depends on FMNH2 as a cofactor.

The enzyme catalyses 5-O-(1-carboxyvinyl)-3-phosphoshikimate = chorismate + phosphate. The protein operates within metabolic intermediate biosynthesis; chorismate biosynthesis; chorismate from D-erythrose 4-phosphate and phosphoenolpyruvate: step 7/7. In terms of biological role, catalyzes the anti-1,4-elimination of the C-3 phosphate and the C-6 proR hydrogen from 5-enolpyruvylshikimate-3-phosphate (EPSP) to yield chorismate, which is the branch point compound that serves as the starting substrate for the three terminal pathways of aromatic amino acid biosynthesis. This reaction introduces a second double bond into the aromatic ring system. The chain is Chorismate synthase from Bdellovibrio bacteriovorus (strain ATCC 15356 / DSM 50701 / NCIMB 9529 / HD100).